Consider the following 631-residue polypeptide: Phosphomethylpyrimidine synthase (631 aa).

Residues Asn239, Met268, Tyr297, His333, 353 to 355, 394 to 397, and Glu433 contribute to the substrate site; these read SRG and DGLR. His437 is a binding site for Zn(2+). A substrate-binding site is contributed by Tyr460. His501 provides a ligand contact to Zn(2+). Residues Cys581, Cys584, and Cys589 each coordinate [4Fe-4S] cluster.

It belongs to the ThiC family. Homodimer. The cofactor is [4Fe-4S] cluster.

The enzyme catalyses 5-amino-1-(5-phospho-beta-D-ribosyl)imidazole + S-adenosyl-L-methionine = 4-amino-2-methyl-5-(phosphooxymethyl)pyrimidine + CO + 5'-deoxyadenosine + formate + L-methionine + 3 H(+). The protein operates within cofactor biosynthesis; thiamine diphosphate biosynthesis. In terms of biological role, catalyzes the synthesis of the hydroxymethylpyrimidine phosphate (HMP-P) moiety of thiamine from aminoimidazole ribotide (AIR) in a radical S-adenosyl-L-methionine (SAM)-dependent reaction. In Escherichia coli (strain 55989 / EAEC), this protein is Phosphomethylpyrimidine synthase.